The sequence spans 769 residues: 5-methyltetrahydropteroyltriglutamate--homocysteine methyltransferase (769 aa).

Residues 17–20 (RELK) and lysine 118 contribute to the 5-methyltetrahydropteroyltri-L-glutamate site. L-homocysteine-binding positions include 441–443 (IGS) and glutamate 494. L-methionine-binding positions include 441 to 443 (IGS) and glutamate 494. 5-methyltetrahydropteroyltri-L-glutamate is bound by residues 525–526 (RC) and tryptophan 571. Residue aspartate 609 participates in L-homocysteine binding. Aspartate 609 contacts L-methionine. Glutamate 615 lines the 5-methyltetrahydropteroyltri-L-glutamate pocket. Positions 651, 653, and 675 each coordinate Zn(2+). Histidine 705 acts as the Proton donor in catalysis. Cysteine 737 is a binding site for Zn(2+).

It belongs to the vitamin-B12 independent methionine synthase family. It depends on Zn(2+) as a cofactor.

It catalyses the reaction 5-methyltetrahydropteroyltri-L-glutamate + L-homocysteine = tetrahydropteroyltri-L-glutamate + L-methionine. The protein operates within amino-acid biosynthesis; L-methionine biosynthesis via de novo pathway; L-methionine from L-homocysteine (MetE route): step 1/1. Its function is as follows. Catalyzes the transfer of a methyl group from 5-methyltetrahydrofolate to homocysteine resulting in methionine formation. This Blochmanniella floridana protein is 5-methyltetrahydropteroyltriglutamate--homocysteine methyltransferase.